Reading from the N-terminus, the 178-residue chain is Cell division protein ZapC (178 aa).

It belongs to the ZapC family. As to quaternary structure, interacts directly with FtsZ.

Its subcellular location is the cytoplasm. Functionally, contributes to the efficiency of the cell division process by stabilizing the polymeric form of the cell division protein FtsZ. Acts by promoting interactions between FtsZ protofilaments and suppressing the GTPase activity of FtsZ. The protein is Cell division protein ZapC of Aeromonas hydrophila subsp. hydrophila (strain ATCC 7966 / DSM 30187 / BCRC 13018 / CCUG 14551 / JCM 1027 / KCTC 2358 / NCIMB 9240 / NCTC 8049).